Here is a 98-residue protein sequence, read N- to C-terminus: Co-chaperonin GroES (98 aa).

This sequence belongs to the GroES chaperonin family. In terms of assembly, heptamer of 7 subunits arranged in a ring. Interacts with the chaperonin GroEL.

The protein localises to the cytoplasm. In terms of biological role, together with the chaperonin GroEL, plays an essential role in assisting protein folding. The GroEL-GroES system forms a nano-cage that allows encapsulation of the non-native substrate proteins and provides a physical environment optimized to promote and accelerate protein folding. GroES binds to the apical surface of the GroEL ring, thereby capping the opening of the GroEL channel. This is Co-chaperonin GroES from Rhizobium leguminosarum bv. trifolii (strain WSM2304).